The chain runs to 332 residues: Endo-1,4-beta-xylanase (332 aa).

The N-terminal stretch at 1–21 is a signal peptide; sequence MLSSTTLLAILSALALTSVQA. The GH10 domain maps to 26–316; the sequence is KNSLDYLANK…KSTYYVVQQA (291 aa). Glu-120 serves as the catalytic Proton donor. A disulfide bond links Cys-128 and Cys-160. Glu-214 acts as the Nucleophile in catalysis. Cys-247 and Cys-253 are oxidised to a cystine.

It belongs to the glycosyl hydrolase 10 (cellulase F) family.

Its subcellular location is the secreted. It catalyses the reaction Endohydrolysis of (1-&gt;4)-beta-D-xylosidic linkages in xylans.. Functionally, requires at least three xylose residues for catalytic activity. Does not have activity against xylobiose. The polypeptide is Endo-1,4-beta-xylanase (Naganishia albida (Cryptococcus albidus)).